A 342-amino-acid polypeptide reads, in one-letter code: Cytosolic Fe-S cluster assembly factor NBP35 (342 aa).

The segment at 1–45 is disordered; it reads MGPSLETPEPVEDVLANPLKQKPQLVAPEPEHCPGPESEQAGTAD. [4Fe-4S] cluster contacts are provided by cysteine 33, cysteine 47, cysteine 50, and cysteine 56. 86-93 is a binding site for ATP; it reads GKGGVGKS. [4Fe-4S] cluster contacts are provided by cysteine 259 and cysteine 262.

Belongs to the Mrp/NBP35 ATP-binding proteins family. NUBP1/NBP35 subfamily. As to quaternary structure, heterotetramer of 2 NBP35 and 2 CFD1 chains. Requires [4Fe-4S] cluster as cofactor.

It is found in the cytoplasm. Functionally, component of the cytosolic iron-sulfur (Fe/S) protein assembly (CIA) machinery. Required for maturation of extramitochondrial Fe-S proteins. The NBP35-CFD1 heterotetramer forms a Fe-S scaffold complex, mediating the de novo assembly of an Fe-S cluster and its transfer to target apoproteins. The protein is Cytosolic Fe-S cluster assembly factor NBP35 of Chaetomium globosum (strain ATCC 6205 / CBS 148.51 / DSM 1962 / NBRC 6347 / NRRL 1970) (Soil fungus).